Here is a 139-residue protein sequence, read N- to C-terminus: Transcription antitermination protein NusB (139 aa).

This sequence belongs to the NusB family.

Functionally, involved in transcription antitermination. Required for transcription of ribosomal RNA (rRNA) genes. Binds specifically to the boxA antiterminator sequence of the ribosomal RNA (rrn) operons. The chain is Transcription antitermination protein NusB from Baumannia cicadellinicola subsp. Homalodisca coagulata.